The sequence spans 306 residues: tRNA dimethylallyltransferase (306 aa).

11–18 (APTAAGKT) contributes to the ATP binding site. Residue 13 to 18 (TAAGKT) coordinates substrate.

Belongs to the IPP transferase family. In terms of assembly, monomer. It depends on Mg(2+) as a cofactor.

The catalysed reaction is adenosine(37) in tRNA + dimethylallyl diphosphate = N(6)-dimethylallyladenosine(37) in tRNA + diphosphate. Its function is as follows. Catalyzes the transfer of a dimethylallyl group onto the adenine at position 37 in tRNAs that read codons beginning with uridine, leading to the formation of N6-(dimethylallyl)adenosine (i(6)A). This is tRNA dimethylallyltransferase from Deinococcus radiodurans (strain ATCC 13939 / DSM 20539 / JCM 16871 / CCUG 27074 / LMG 4051 / NBRC 15346 / NCIMB 9279 / VKM B-1422 / R1).